Here is a 918-residue protein sequence, read N- to C-terminus: Signal transduction histidine-protein kinase BarA (918 aa).

Over 1 to 10 (MTNYSLRARM) the chain is Cytoplasmic. Residues 11–31 (MILILAPTVLIGLLLSIFFVV) form a helical membrane-spanning segment. At 32-175 (HRYNDLQRQL…LKSVRLQQYK (144 aa)) the chain is on the periplasmic side. Residues 176 to 196 (EIFISCVMMLFCIGIALIFGW) form a helical membrane-spanning segment. Residues 197–918 (RLMRDVTGPI…VAREASKILG (722 aa)) are Cytoplasmic-facing. The 53-residue stretch at 200 to 252 (RDVTGPIRNMVNTVDRIRRGQLDSRVEGFMLGELDMLKNGINSMAMSLAAYHE) folds into the HAMP domain. In terms of domain architecture, Histidine kinase spans 299 to 520 (NMSHELRTPL…TFWFHINLDL (222 aa)). His302 bears the Phosphohistidine; by autocatalysis mark. The Response regulatory domain occupies 669–785 (TVMAVDDNPA…RLHNLLLRYK (117 aa)). A 4-aspartylphosphate modification is found at Asp718. Positions 822 to 918 (KTDLARDMLQ…VAREASKILG (97 aa)) constitute an HPt domain. The residue at position 861 (His861) is a Phosphohistidine.

Activation requires a sequential transfer of a phosphate group from a His in the primary transmitter domain, to an Asp in the receiver domain and to a His in the secondary transmitter domain.

It localises to the cell inner membrane. It catalyses the reaction ATP + protein L-histidine = ADP + protein N-phospho-L-histidine.. Member of the two-component regulatory system UvrY/BarA involved in the regulation of carbon metabolism via the CsrA/CsrB regulatory system. Phosphorylates UvrY, probably via a four-step phosphorelay. This chain is Signal transduction histidine-protein kinase BarA (barA), found in Shigella flexneri.